We begin with the raw amino-acid sequence, 245 residues long: Cell division protein ZapD (245 aa).

Belongs to the ZapD family. Interacts with FtsZ.

Its subcellular location is the cytoplasm. Its function is as follows. Cell division factor that enhances FtsZ-ring assembly. Directly interacts with FtsZ and promotes bundling of FtsZ protofilaments, with a reduction in FtsZ GTPase activity. This is Cell division protein ZapD from Photobacterium profundum (strain SS9).